Consider the following 218-residue polypeptide: Ribose-5-phosphate isomerase A (218 aa).

Substrate-binding positions include threonine 28–threonine 31, aspartate 81–aspartate 84, and lysine 94–glycine 97. Glutamate 103 (proton acceptor) is an active-site residue. Lysine 121 contacts substrate.

It belongs to the ribose 5-phosphate isomerase family. Homodimer.

The enzyme catalyses aldehydo-D-ribose 5-phosphate = D-ribulose 5-phosphate. It functions in the pathway carbohydrate degradation; pentose phosphate pathway; D-ribose 5-phosphate from D-ribulose 5-phosphate (non-oxidative stage): step 1/1. Functionally, catalyzes the reversible conversion of ribose-5-phosphate to ribulose 5-phosphate. This is Ribose-5-phosphate isomerase A from Blochmanniella pennsylvanica (strain BPEN).